The sequence spans 497 residues: Cobyrinate a,c-diamide synthase (497 aa).

In terms of domain architecture, GATase cobBQ-type spans 273–478 (RIGIALDEAF…AHLHGVAYRE (206 aa)). Cysteine 355 serves as the catalytic Nucleophile.

This sequence belongs to the CobB/CbiA family. Mg(2+) is required as a cofactor.

It carries out the reaction cob(II)yrinate + 2 L-glutamine + 2 ATP + 2 H2O = cob(II)yrinate a,c diamide + 2 L-glutamate + 2 ADP + 2 phosphate + 2 H(+). It catalyses the reaction Ni-sirohydrochlorin + 2 L-glutamine + 2 ATP + 2 H2O = Ni-sirohydrochlorin a,c-diamide + 2 L-glutamate + 2 ADP + 2 phosphate + 2 H(+). It participates in cofactor biosynthesis; adenosylcobalamin biosynthesis; cob(II)yrinate a,c-diamide from sirohydrochlorin (anaerobic route): step 10/10. In terms of biological role, catalyzes the ATP-dependent amidation of the two carboxylate groups at positions a and c of cobyrinate, using either L-glutamine or ammonia as the nitrogen source (Potential). Involved in the biosynthesis of the unique nickel-containing tetrapyrrole coenzyme F430, the prosthetic group of methyl-coenzyme M reductase (MCR), which plays a key role in methanogenesis and anaerobic methane oxidation. Catalyzes the ATP-dependent amidation of the two carboxylate groups at positions a and c of Ni-sirohydrochlorin, using L-glutamine or ammonia as the nitrogen source. In Methanosarcina acetivorans (strain ATCC 35395 / DSM 2834 / JCM 12185 / C2A), this protein is Cobyrinate a,c-diamide synthase.